The sequence spans 726 residues: Catalase-peroxidase 1 (726 aa).

The interval 1 to 33 is disordered; that stretch reads MSTSDDIHNTTATGKCPFHQGGHDQSAGAGTTT. A cross-link (tryptophyl-tyrosyl-methioninium (Trp-Tyr) (with M-252)) is located at residues 105–226; sequence WHGAGTYRSI…LGATEMGLIY (122 aa). H106 serves as the catalytic Proton acceptor. The segment at residues 226–252 is a cross-link (tryptophyl-tyrosyl-methioninium (Tyr-Met) (with W-105)); it reads YVNPEGPDHSGEPLSAAAAIRATFGNM. Residue H267 coordinates heme b.

Belongs to the peroxidase family. Peroxidase/catalase subfamily. Homodimer or homotetramer. Heme b is required as a cofactor. Formation of the three residue Trp-Tyr-Met cross-link is important for the catalase, but not the peroxidase activity of the enzyme.

The catalysed reaction is H2O2 + AH2 = A + 2 H2O. The enzyme catalyses 2 H2O2 = O2 + 2 H2O. Functionally, bifunctional enzyme with both catalase and broad-spectrum peroxidase activity. This Escherichia coli O157:H7 protein is Catalase-peroxidase 1.